A 734-amino-acid polypeptide reads, in one-letter code: Photosystem I P700 chlorophyll a apoprotein A2 (734 aa).

8 consecutive transmembrane segments (helical) span residues 46–69 (IFAS…FHVA), 135–158 (LYAG…LHLQ), 175–199 (LNHH…HVAI), 273–291 (MAHH…GHMY), 330–353 (LHFQ…QHMY), 369–395 (AALY…IFLI), 417–439 (AIIS…LYVH), and 517–535 (FLVH…LILV). Positions 559 and 568 each coordinate [4Fe-4S] cluster. Transmembrane regions (helical) follow at residues 575 to 596 (AFYL…YWHW) and 643 to 665 (LSVW…MFLI). 3 residues coordinate chlorophyll a: His654, Met662, and Tyr670. Trp671 lines the phylloquinone pocket. A helical transmembrane segment spans residues 707 to 727 (LVGLAHFSVGYIFTYAAFLIA).

Belongs to the PsaA/PsaB family. The PsaA/B heterodimer binds the P700 chlorophyll special pair and subsequent electron acceptors. PSI consists of a core antenna complex that captures photons, and an electron transfer chain that converts photonic excitation into a charge separation. The eukaryotic PSI reaction center is composed of at least 11 subunits. P700 is a chlorophyll a/chlorophyll a' dimer, A0 is one or more chlorophyll a, A1 is one or both phylloquinones and FX is a shared 4Fe-4S iron-sulfur center. serves as cofactor.

The protein localises to the plastid. The protein resides in the chloroplast thylakoid membrane. It carries out the reaction reduced [plastocyanin] + hnu + oxidized [2Fe-2S]-[ferredoxin] = oxidized [plastocyanin] + reduced [2Fe-2S]-[ferredoxin]. In terms of biological role, psaA and PsaB bind P700, the primary electron donor of photosystem I (PSI), as well as the electron acceptors A0, A1 and FX. PSI is a plastocyanin-ferredoxin oxidoreductase, converting photonic excitation into a charge separation, which transfers an electron from the donor P700 chlorophyll pair to the spectroscopically characterized acceptors A0, A1, FX, FA and FB in turn. Oxidized P700 is reduced on the lumenal side of the thylakoid membrane by plastocyanin. The sequence is that of Photosystem I P700 chlorophyll a apoprotein A2 from Pinus thunbergii (Japanese black pine).